A 249-amino-acid chain; its full sequence is Thrombin-like enzyme barnettobin (249 aa).

The N-terminal stretch at 1–10 (APKELQVSYA) is a signal peptide. Residues 11 to 16 (HKSSEL) constitute a propeptide that is removed on maturation. In terms of domain architecture, Peptidase S1 spans 17 to 240 (VIGGDECDIN…YPPWIQSIIA (224 aa)). 6 disulfides stabilise this stretch: Cys-23–Cys-154, Cys-41–Cys-57, Cys-89–Cys-247, Cys-133–Cys-201, Cys-165–Cys-180, and Cys-191–Cys-216. Residues His-56 and Asp-101 each act as charge relay system in the active site. 2 N-linked (GlcNAc...) asparagine glycosylation sites follow: Asn-145 and Asn-161. Ser-195 (charge relay system) is an active-site residue. Residue Asn-242 is glycosylated (N-linked (GlcNAc...) asparagine).

This sequence belongs to the peptidase S1 family. Snake venom subfamily. As to quaternary structure, monomer. Glycoprotein, contains approx. 52% carbohydrate which could be removed by N-glycosidase. Glycosylation is important, since deglycosylated barnettobin loses its clotting and defibrinogenating effects. In terms of tissue distribution, expressed by the venom gland.

The protein localises to the secreted. Its activity is regulated as follows. Both coagulant and amidolytic activities are inhibited by PMSF. Amidolytic activity is partially inhibited by DTT, chymostatin, SBTI and TLCK, but not by heparin and EDTA. Functionally, thrombin-like snake venom serine protease that releases only fibrinopeptide A from human Aalpha chain of fibrinogen (specific coagulant activity was 251.7 NIH thrombin units/mg). Also shows fibrino(geno)lytic activities in vitro and defibrinogenating effects in vivo. This Bothrops barnetti (Barnett's lancehead) protein is Thrombin-like enzyme barnettobin.